Consider the following 946-residue polypeptide: DNA primase (946 aa).

The tract at residues 596 to 626 (RDTEEDEDGKEDKNNVPDNGVFQKTTSSVDT) is disordered. Positions 617 to 626 (FQKTTSSVDT) are enriched in polar residues. A CHC2-type zinc finger spans residues 881–920 (CLNYTHRNPQETVQVFIDLRTEHSYALWASLWSRCFTKKC).

The protein belongs to the herpesviridae DNA primase family. In terms of assembly, associates with the helicase and the primase-associated factor to form the helicase-primase factor.

It is found in the host nucleus. Its function is as follows. Essential component of the helicase/primase complex. Unwinds the DNA at the replication forks and generates single-stranded DNA for both leading and lagging strand synthesis. The primase initiates primer synthesis and thereby produces large amount of short RNA primers on the lagging strand that the polymerase elongates using dNTPs. The sequence is that of DNA primase (UL70) from Human cytomegalovirus (strain AD169) (HHV-5).